A 268-amino-acid chain; its full sequence is Small ribosomal subunit protein eS1 (268 aa).

The segment at 1–21 is disordered; that stretch reads MAVGKNKGLSKGGKKGGKKKV.

The protein belongs to the eukaryotic ribosomal protein eS1 family. In terms of assembly, component of the small ribosomal subunit. Mature ribosomes consist of a small (40S) and a large (60S) subunit. The 40S subunit contains about 33 different proteins and 1 molecule of RNA (18S). The 60S subunit contains about 49 different proteins and 3 molecules of RNA (28S, 5.8S and 5S).

It is found in the cytoplasm. In terms of biological role, essential for oogenesis; required for late follicle cell development. This chain is Small ribosomal subunit protein eS1, found in Drosophila virilis (Fruit fly).